Consider the following 1173-residue polypeptide: MSSSLLWAVDIFGRVYTLSTVGQYWELCKDTQLEFKRVSAVKQCCWGIACDHQVYTYVFSGDVPIRYQEETYENQRWNPVGGFCEKLMPSDRWQWSDVSGLKHQQLDSFTLPSPHWEWESDWYVDENIGGEPTEKGGWTYAIDFPSTYTKDKKWNSCVRRRRWIRYRRYKSRDVWAKITSHDDPERLPDPFNDISIGGWEITDEPLGRLSVWAVSLQGRVWYRENVCHHNPEGSTWSLISTPGEVAQISCGSYDLLWATLWEGQAIVREGIDRNNPQGISWSTVESPSSDNGIMHVSVGVDVVWCITKDRKVWFRRGVNSHNPCGTSWIEMVGEMMMVNVGLNNQVWGIGCDDRTIYFRQGVTPSELSGKMWKAIVCGRESDRSQTGSSTSLLSAGCFFTDDIQNQTNTVIQGDADTSSDTELSSIPTNLSSTPPMGAAASSASSTGSQAAGAPASVTVDPLDSDQGEAPAASASDEKAHLESRKSTNPTPSTELQWTNIDLKEAHRHAVLSVSTFTETSSLSSLGMFSVGAEEQYGADEHPLWAWVSGGGCLVDLHSPLKWFAVPSGLSSSVQSLSLSITPAQTAAWRKQIFQQLSERTKRELENFRHYEQAVEQSVWVKTGMLQWWRNWKPHKWMDVRVALEQFTGSDGMRDSILFIYYMYHEEKKYIHVFLNEVTIIAEVLKEGKHSFALYTPERTKQRWPICLAATTEQEMHDWLSLLTMSCCESRRIQGPPSHHAIWSVSCKGDIFVSEPSPELEAEPHPMPCDQMFWRQVGGHLRLVECNNRGIVWGIGYDHTVWVYTGGYGGGFIQGLASSADNIYTQSDVKCVYIYENQRWNPVTGYSSRGLPTDRYMWSDASGLQECTKANTKPPSPQWSWVSDWYIDFSTSGGTDREGWQYAADFPASYHGHKTMKDFVRRRRWARKCKIVTNGPWLEVPPVTLWDISIIPSSDADDEESVALWAISDKGDVLCRLGVTQQNPAGTSWLHVGTDQPFVSISVGAFFQVWAVARDGSAFYRGSVSPKKPAGDCWYHIPSPQKQKLKQVSVGRTSVFVLDKNGNLWYRQGITPSYPQGSAWDHVSNNIRKMSVGPLDQVWVIADKVQGSHGLSCGTVCHRTGVQPMEPKGLAWDYGIGGGWEHVTVRGNASQAPRGTVPSESPPEPMESEGRVMC.

TECPR repeat units lie at residues 210–239, 254–285, 301–332, and 344–376; these read SVWA…WSLI, DLLW…STVE, DVVW…IEMV, and NQVW…KAIV. A compositionally biased stretch (polar residues) spans 413–430; it reads GDADTSSDTELSSIPTNL. The segment at 413–495 is disordered; sequence GDADTSSDTE…STNPTPSTEL (83 aa). Over residues 431-456 the composition is skewed to low complexity; sequence SSTPPMGAAASSASSTGSQAAGAPAS. Residues 475–485 show a composition bias toward basic and acidic residues; it reads SDEKAHLESRK. Polar residues predominate over residues 486–495; sequence STNPTPSTEL. Positions 618–727 constitute a PH domain; it reads VWVKTGMLQW…WLSLLTMSCC (110 aa). TECPR repeat units follow at residues 739-766, 962-991, 1007-1037, 1053-1083, and 1095-1135; these read HAIW…PHPM, ALWA…WLHV, QVWA…YHIP, SVFV…DHVS, and DQVW…DYGI. Residues 1147–1173 form a disordered region; that stretch reads NASQAPRGTVPSESPPEPMESEGRVMC.

Belongs to the TECPR1 family.

The protein localises to the cytoplasmic vesicle. It is found in the autophagosome membrane. Its subcellular location is the lysosome membrane. Its function is as follows. Tethering factor involved in autophagy. Involved in autophagosome maturation by promoting the autophagosome fusion with lysosomes. Binds phosphatidylinositol-3-phosphate (PtdIns(3)P) present at the surface of autophagosomes. The sequence is that of Tectonin beta-propeller repeat-containing protein 1 (TECPR1) from Gallus gallus (Chicken).